Reading from the N-terminus, the 151-residue chain is UPF0179 protein MJ1627 (151 aa).

Belongs to the UPF0179 family.

This chain is UPF0179 protein MJ1627, found in Methanocaldococcus jannaschii (strain ATCC 43067 / DSM 2661 / JAL-1 / JCM 10045 / NBRC 100440) (Methanococcus jannaschii).